A 1040-amino-acid chain; its full sequence is MRNNTAFEQFTLNPCEQIPLDDKHNIGFNKNNTPDYSSSASSDQLLKNDINRHEMERRIAFLNRKQALFNAFMHDSSSSLNTMESNIEKVNGLFPNDNSVIALKPNEEKLNSSLSVENNDSTYTDATLIAPKIGLDRPNINAITIDVDGHSLQNEISSSTDKLSPSQSDALFEQKQDSLFWNDNAVIVVSDSESDDNNVRTKSSLNDHDKVNMKEKRNLELAFMNSKRKKLELPSLPVLSTAGPSYTNSLALPPFHHHNNYKMFNTTHTLEDDKFLQGKGTSNNPISLSDEEDNEINFQNKRYGSDSVILPGGLLHDSKLPEPGKHLFHLQWYHDRFHNIEGFNLSDSNNQKVQDDQQQQLEELFKDLDEQLVNDPTIREGTPAGLIPTLMEHQKEGLMWLKRLEESSKKGGILADDMGLGKTVQALALLVTRPPESKSVKTTLIITPVSLLQQWHNEILTKIAPSHRPTVYIHHGSSKKHKIAEQLMSYDIVLTTYNVIAYEFKNKMAYDKSIEDNAPIKKFEHLPFFEAEWYRVILDEAQTIKNRNTLAARGCCLLESTYRWCLSGTPMQNGVEEFYSLIKFLRIKPYSDWSSFSKDFTIPLSSNINTSAPMKRFRGLLKAVLLRRTKNTKIDGKPILTLPPKTAVKSETDLSSSEMEFYNTLQSGAQIQMRKYLQEGTITTHYGSLLVLLLRLRQACCHPWLIVAREAAVDDNDSFQAKNRAIYNQIYPEAVNRLKLIETLQCSLCMDVVAELLIIVPCGHFLCRECLTHVITSSEDMAKQTSNENISPKCSVCEEYIDTERLLSYALFRRYSGMAPIVDADNKLRTENISELLPKQYSNILENRQMGMKIFTDPKHWTTSTKIEKALNAVKEIIKKQPTDKILIFSQFVSFLELFTVPFRQEGIKYLMYTGGLSTAERNQALINFEVDPNVRVLLISLKAGNVGLNLTCANHVIILDPFWNPYIEEQAVDRAHRIGQDKPVNILRIVTNNTIEERVLALQDRKRELIDSALGEKGLREISRLNTKELSFLFGMSSR.

Residues 403–588 (RLEESSKKGG…YSLIKFLRIK (186 aa)) enclose the Helicase ATP-binding domain. ATP is bound at residue 416 to 423 (DDMGLGKT). Residues 746-798 (CSLCMDVVAELLIIVPCGHFLCRECLTHVITSSEDMAKQTSNENISPKCSVCE) form an RING-type zinc finger. A Helicase C-terminal domain is found at 866 to 1032 (KIEKALNAVK…ISRLNTKELS (167 aa)).

It belongs to the SNF2/RAD54 helicase family.

The protein localises to the nucleus. This is an uncharacterized protein from Schizosaccharomyces pombe (strain 972 / ATCC 24843) (Fission yeast).